The sequence spans 73 residues: Putative membrane protein insertion efficiency factor (73 aa).

Belongs to the UPF0161 family.

The protein localises to the cell inner membrane. Could be involved in insertion of integral membrane proteins into the membrane. This is Putative membrane protein insertion efficiency factor from Treponema denticola (strain ATCC 35405 / DSM 14222 / CIP 103919 / JCM 8153 / KCTC 15104).